Consider the following 313-residue polypeptide: Porphobilinogen deaminase (313 aa).

Cys242 carries the S-(dipyrrolylmethanemethyl)cysteine modification.

Belongs to the HMBS family. Monomer. It depends on dipyrromethane as a cofactor.

The enzyme catalyses 4 porphobilinogen + H2O = hydroxymethylbilane + 4 NH4(+). The protein operates within porphyrin-containing compound metabolism; protoporphyrin-IX biosynthesis; coproporphyrinogen-III from 5-aminolevulinate: step 2/4. Tetrapolymerization of the monopyrrole PBG into the hydroxymethylbilane pre-uroporphyrinogen in several discrete steps. The protein is Porphobilinogen deaminase of Erwinia tasmaniensis (strain DSM 17950 / CFBP 7177 / CIP 109463 / NCPPB 4357 / Et1/99).